Here is a 176-residue protein sequence, read N- to C-terminus: MTNIRKSHPLIKIINDAFIDLPAPSNISSWWNFGSLLGVCLAVQILTGLFLAMHYTSDTATAFNSVTHICRDVNYGWLLRYLHANGASMFFICLYLHVGRGLYYGSYTYTETWNVGIILLFAVMATAFMGYVLPWGQMSFWGATVITNLLFAIPYIGTDLVEWIWGGFSVDKATLT.

3 helical membrane-spanning segments follow: residues 33-53 (FGSL…FLAM), 77-98 (WLLR…YLHV), and 113-133 (WNVG…GYVL). Heme b-binding residues include His83 and His97.

Belongs to the cytochrome b family. In terms of assembly, the cytochrome bc1 complex contains 11 subunits: 3 respiratory subunits (MT-CYB, CYC1 and UQCRFS1), 2 core proteins (UQCRC1 and UQCRC2) and 6 low-molecular weight proteins (UQCRH/QCR6, UQCRB/QCR7, UQCRQ/QCR8, UQCR10/QCR9, UQCR11/QCR10 and a cleavage product of UQCRFS1). This cytochrome bc1 complex then forms a dimer. Heme b serves as cofactor.

Its subcellular location is the mitochondrion inner membrane. In terms of biological role, component of the ubiquinol-cytochrome c reductase complex (complex III or cytochrome b-c1 complex) that is part of the mitochondrial respiratory chain. The b-c1 complex mediates electron transfer from ubiquinol to cytochrome c. Contributes to the generation of a proton gradient across the mitochondrial membrane that is then used for ATP synthesis. The protein is Cytochrome b (MT-CYB) of Tadarida brasiliensis (Brazilian free-tailed bat).